The chain runs to 190 residues: Ion-translocating oxidoreductase complex subunit B (190 aa).

The tract at residues 1–26 (MTALWIAIAALSALGLLFGLVLGYAA) is hydrophobic. The 4Fe-4S domain occupies 32–90 (EEDPVAEQVDEILPQSQCGQCGYPGCRPYAEAVANGEMINKCAPGGEQVMLKLAELLNV). [4Fe-4S] cluster is bound by residues C49, C52, C57, C73, C115, C118, C121, C125, C145, C148, C151, and C155. 4Fe-4S ferredoxin-type domains follow at residues 106–135 (QVAY…GATR) and 136–165 (AMHT…MRPV).

This sequence belongs to the 4Fe4S bacterial-type ferredoxin family. RnfB subfamily. The complex is composed of six subunits: RnfA, RnfB, RnfC, RnfD, RnfE and RnfG. [4Fe-4S] cluster serves as cofactor.

It localises to the cell inner membrane. Functionally, part of a membrane-bound complex that couples electron transfer with translocation of ions across the membrane. This chain is Ion-translocating oxidoreductase complex subunit B, found in Serratia proteamaculans (strain 568).